A 566-amino-acid polypeptide reads, in one-letter code: Arginine--tRNA ligase (566 aa).

Residues 123–133 carry the 'HIGH' region motif; that stretch reads PNIAKPFHIGH.

It belongs to the class-I aminoacyl-tRNA synthetase family. In terms of assembly, monomer.

It is found in the cytoplasm. The enzyme catalyses tRNA(Arg) + L-arginine + ATP = L-arginyl-tRNA(Arg) + AMP + diphosphate. In Halothermothrix orenii (strain H 168 / OCM 544 / DSM 9562), this protein is Arginine--tRNA ligase.